We begin with the raw amino-acid sequence, 28 residues long: Seed allergenic protein 1 (28 aa).

The tract at residues 1–28 (VTXEEGXYSISDQSKVGEQXIRSPDREM) is disordered.

The polypeptide is Seed allergenic protein 1 (Prunus dulcis (Almond)).